The chain runs to 392 residues: MTEEFNESMINDIKEGDKVTGEVQQVEDKQVVVHINGGKFNGIIPISQLSTHHIENPSEVVKVGDEVEAYVTKIEFDEENDTGAYILSKRQLETEKSYEYLQEKLDNDEVIEAEVTEVVKGGLVVDVGQRGFVPASLISTDFIEDFSVFDGQTIRIKVEELDPENNRVILSRKAVEQLENDAKKASILDSLNEGDVIDGKVARLTNFGAFIDIGGVDGLVHVSELSHEHVQTPEEVVSVGEAVKVKVKSVEKDSERISLSIKDTLPTPFENIKGKFHEDDVIEGTVVRLANFGAFVEIAPSVQGLVHISEIDHKHIGSPNEVLEPGQQVNVKILGIDEDNERISLSIKATLPKENVIESDASTTQSYLEDDNDEDKPTLGDVFGDKFKDLKF.

4 consecutive S1 motif domains span residues 16-90 (GDKV…LSKR), 108-173 (DEVI…LSRK), 194-262 (GDVI…LSIK), and 279-348 (DDVI…LSIK). Residues 361 to 380 (ASTTQSYLEDDNDEDKPTLG) are disordered.

This sequence belongs to the bacterial ribosomal protein bS1 family.

Binds mRNA; thus facilitating recognition of the initiation point. It is needed to translate mRNA with a short Shine-Dalgarno (SD) purine-rich sequence. This Staphylococcus epidermidis (strain ATCC 35984 / DSM 28319 / BCRC 17069 / CCUG 31568 / BM 3577 / RP62A) protein is Small ribosomal subunit protein bS1 (rpsA).